Reading from the N-terminus, the 1434-residue chain is MKDLLKFLKAQTKTEEFDSIKIGLASPDMIRSWSFGEVKKPETINYRTFKPERDGLFCARIFGPVKDYECLCGKYKRLKHRGVICEKCGVEVTQTKVRRERMGHIELASPTAHIWFLKSLPSRIGLLLDMTLRDIERVLYFESYVVIEPGMTNLERSQMLSEEQYLDALEEWGDEFDAKMGAEAILALLRAIDLEGEVRTMREELDQTNSETKRKKTTKRLKLMEAFLQSGNKPEWMIMTVLPVLPPDLRPLVPLDGGRFATSDLNDLYRRVINRNNRLKRLLDLAAPDIIVRNEKRMLQESVDALLDNGRRGRAITGSNKRPLKSLADMIKGKQGRFRQNLLGKRVDYSGRSVITVGPTLRLHQCGLPKKMALELFKPFIYGKLESRGLATTIKAAKKMVEREEAVVWDILDEVIREHPVLLNRAPTLHRLGIQAFEPTLIEGKAIQLHPLVCAAYNADFDGDQMAVHVPLTLEAQLEARALMMSTNNILSPASGEPIIVPSQDVVLGLYYMTRARINAKGEGMVLSGPKEAEKVYRAGLADLHARVKVRITEYLRQEDGSLRAHTEMKNTTVGRAILSLILPKGMEYALIDEPKVLTAAEQADLDANPQNWIKSVSNKALGKKLISRLLNTCYRKQGLKDTVIFADQLMYTGFHYAALSGASVGIDDMVIPDAKKDIIAAAEAEVAEIQDQFLSGLVTAGERYNKVIDIWASANERVSKAMMENLSKERNVNSLGEEEEQASFNSIFMMADSGARGSAAQIRQLAGMRGLMAKPDGSIIETPIVANFREGLNVLQYFISTHGARKGLADTALKTANSGYLTRRLVDVAQDMVITEDDCGTTEGLWMTPLIEGGDVVEPLRERVLGRVVADDVIKPGTEDEVLVARNTLLDEQLCDLLERNSVDRVKVRSAITCETDFGNCAHCYGRDLARGHLVNKGEAVGVIAAQSIGEPGTQLTMRTFHIGGAASRAAAESSIQVKNTGSIKLQNAKFVHNSDDKLVITSRSTELTIMDEMGRTKESHKLPYGSVLEVKDGQAVNAGETVANWDPHTHPIITEVAGRLHFEHMIDGVTITRQTDELTGLSSIVVLDVNERPSAGKEMRPTVKLVDLNGKDVMIPGTDVAAQYFLPGKAIVNLEDGANVGVGDAVARIPQESGGTKDITGGLPRVADLFEARQPKEPAILAEISGTISFGKETKGKRRLVITPTDGGDVYEEMIPKWRNLNVFEGEKVEKGEVLADGPESAHDILRLRGISPVANYIANEVQDVYRLQGVKINDKHIEVIVRQMLRKCEILSAGDTDLIEGEQVEVARVKIANRKLVAEGKTPATFRHILMGITKASLSTESFISAASFQETTRVLTEAAVGGKRDELRGLKENVIVGRLIPAGTGFAYHHGRINQRAAAARAVGVPQVTADEAQQNLADLLNAAGSFDEE.

Residues C70, C72, C85, and C88 each contribute to the Zn(2+) site. Mg(2+) contacts are provided by D460, D462, and D464. Zn(2+) is bound by residues C840, C915, C922, and C925.

The protein belongs to the RNA polymerase beta' chain family. As to quaternary structure, the RNAP catalytic core consists of 2 alpha, 1 beta, 1 beta' and 1 omega subunit. When a sigma factor is associated with the core the holoenzyme is formed, which can initiate transcription. The cofactor is Mg(2+). It depends on Zn(2+) as a cofactor.

The catalysed reaction is RNA(n) + a ribonucleoside 5'-triphosphate = RNA(n+1) + diphosphate. DNA-dependent RNA polymerase catalyzes the transcription of DNA into RNA using the four ribonucleoside triphosphates as substrates. The protein is DNA-directed RNA polymerase subunit beta' of Aeromonas hydrophila subsp. hydrophila (strain ATCC 7966 / DSM 30187 / BCRC 13018 / CCUG 14551 / JCM 1027 / KCTC 2358 / NCIMB 9240 / NCTC 8049).